Here is a 111-residue protein sequence, read N- to C-terminus: N-alpha-acetyltransferase 38-B, NatC auxiliary subunit (111 aa).

Positions Thr28–Thr106 constitute a Sm domain.

It belongs to the snRNP Sm proteins family. In terms of assembly, component of the N-terminal acetyltransferase C (NatC) complex, which is composed of naa35, naa38 and naa30.

The protein localises to the cytoplasm. Functionally, auxillary component of the N-terminal acetyltransferase C (NatC) complex which catalyzes acetylation of N-terminal methionine residues. The chain is N-alpha-acetyltransferase 38-B, NatC auxiliary subunit (naa38-b) from Xenopus laevis (African clawed frog).